We begin with the raw amino-acid sequence, 234 residues long: Accessory gland protein Acp29AB (234 aa).

The first 21 residues, 1-21 (MYASNLLYLLALWNLWDLSGG), serve as a signal peptide directing secretion. Asn61 and Asn164 each carry an N-linked (GlcNAc...) asparagine glycan. The C-type lectin domain occupies 137-234 (VTCRKMNGHL…SFVCQADQWA (98 aa)). 2 disulfide bridges follow: Cys139–Cys228 and Cys207–Cys220.

In terms of tissue distribution, main cells of the accessory gland and in seminal fluid.

Its subcellular location is the secreted. Functionally, responsible for physiological and behavioral changes in mated female flies. The chain is Accessory gland protein Acp29AB (Acp29AB) from Drosophila melanogaster (Fruit fly).